A 213-amino-acid chain; its full sequence is Glycerol-3-phosphate acyltransferase (213 aa).

Helical transmembrane passes span 2 to 22 (ITIV…GLWI), 52 to 74 (AGMA…PIIF), 81 to 100 (PLIF…FAGF), 112 to 132 (VIFG…FGAL), 143 to 163 (VTAS…GFIL), and 164 to 184 (SNYD…IIIR).

It belongs to the PlsY family. As to quaternary structure, probably interacts with PlsX.

The protein localises to the cell membrane. It carries out the reaction an acyl phosphate + sn-glycerol 3-phosphate = a 1-acyl-sn-glycero-3-phosphate + phosphate. It participates in lipid metabolism; phospholipid metabolism. Functionally, catalyzes the transfer of an acyl group from acyl-phosphate (acyl-PO(4)) to glycerol-3-phosphate (G3P) to form lysophosphatidic acid (LPA). This enzyme utilizes acyl-phosphate as fatty acyl donor, but not acyl-CoA or acyl-ACP. The chain is Glycerol-3-phosphate acyltransferase from Streptococcus pneumoniae (strain Hungary19A-6).